The chain runs to 211 residues: MNRKKLQKLTDTLTKNCKHFNKFEVNCLIKLFYDLVGGVERQGLVVGLDRNAFRNILHVTFGMTDDMIMDRVFRGFDKDNDGCVNVLEWIHGLSLFLRGSLEEKMKYCFEVFDLNGDGFISKEEMFHMLKNSLLKQPSEEDPDEGIKDLVEITLKKMDHDHDGKLSFADYELAVREETLLLEAFGPCLPDPKSQMEFEAQVFKDPNEFNDM.

3 consecutive EF-hand domains span residues 64–99 (TDDM…FLRG), 100–135 (SLEE…SLLK), and 145–180 (GIKD…ETLL). Aspartate 77, aspartate 79, aspartate 81, cysteine 83, glutamate 88, aspartate 113, asparagine 115, aspartate 117, glutamate 124, aspartate 158, aspartate 160, aspartate 162, lysine 164, and aspartate 169 together coordinate Ca(2+).

Component of the outer dynein arm-docking complex along with ODAD1, ODAD2, ODAD3 and ODAD4. Strong expression in the respiratory epithelium. Expressed in the sperm.

It is found in the cytoplasm. The protein resides in the cytoskeleton. Its subcellular location is the cilium axoneme. The protein localises to the cell projection. It localises to the cilium. It is found in the flagellum. In terms of biological role, component of the outer dynein arm-docking complex (ODA-DC) that mediates outer dynein arms (ODA) binding onto the doublet microtubule. Seems to regulate the assembly of both ODAs and their axonemal docking complex onto ciliary microtubules. Regulates ciliary and flagellar motility and is required for cilia-driven determination of body laterality. This is Calaxin from Homo sapiens (Human).